We begin with the raw amino-acid sequence, 461 residues long: Argininosuccinate lyase (461 aa).

The protein belongs to the lyase 1 family. Argininosuccinate lyase subfamily.

Its subcellular location is the cytoplasm. The enzyme catalyses 2-(N(omega)-L-arginino)succinate = fumarate + L-arginine. It functions in the pathway amino-acid biosynthesis; L-arginine biosynthesis; L-arginine from L-ornithine and carbamoyl phosphate: step 3/3. Its activity is regulated as follows. Strongly inhibited by L-arginine. Inhibitory effects are lowered at pH 7.0 compared to those at pH 8.0. At 42 degrees Celsius and pH 8.0, activity decreases to 77% and 25% in the presence of 1 mM and 10 mM arginine, respectively. The other amino and organic acids do not affect activity. Functionally, catalyzes the last step of arginine biosynthesis, the conversion of argininosuccinate into L-arginine and fumarate. The sequence is that of Argininosuccinate lyase from Nostoc sp. (strain PCC 7120 / SAG 25.82 / UTEX 2576).